The sequence spans 853 residues: Cytochrome P450 monooxygenase mpaDE (853 aa).

Residues 1–6 (MKSLSL) are Lumenal-facing. Residues 7–29 (TWITAVAVVLYLVQRYVRSYWRL) traverse the membrane as a helical segment. Topologically, residues 30 to 853 (KDIPGPVLAK…DIENSIEGQK (824 aa)) are cytoplasmic. C449 contributes to the heme binding site.

It belongs to the cytochrome P450 family. It depends on heme as a cofactor.

It localises to the endoplasmic reticulum membrane. It catalyses the reaction 5-methylorsellinate + reduced [NADPH--hemoprotein reductase] + O2 = 4,6-dihydroxy-2-(hydroxymethyl)-3-methylbenzoate + oxidized [NADPH--hemoprotein reductase] + H2O + H(+). It carries out the reaction 4,6-dihydroxy-2-(hydroxymethyl)-3-methylbenzoate + H(+) = 5,7-dihydroxy-4-methylphthalide + H2O. Its pathway is secondary metabolite biosynthesis; terpenoid biosynthesis. Functionally, cytochrome P450 monooxygenase; part of the gene cluster that mediates the biosynthesis of mycophenolic acid (MPA), the first isolated antibiotic natural product in the world obtained from a culture of Penicillium brevicompactum in 1893. MpaDE is an endoplasmic reticulum-bound enzyme that catalyzes the conversion of 5-methylorsellinic acid (5MOA) into the phthalide compound 5,7-dihydroxy-4,6-dimethylphthalide (DHMP). MpaDE first catalyzes hydroxylation of 5-MOA to 4,6-dihydroxy-2-(hydroxymethyl)-3-methylbenzoic acid (DHMB), and then acts as a lactone synthase that catalyzes the ring closure to convert DHMB into DHMP. The first step of the pathway is the synthesis of 5-methylorsellinic acid (5MOA) by the cytosolic polyketide synthase mpaC. 5MOA is then converted to the phthalide compound 5,7-dihydroxy-4,6-dimethylphthalide (DHMP) by the endoplasmic reticulum-bound cytochrome P450 monooxygenase mpaDE. MpaDE first catalyzes hydroxylation of 5-MOA to 4,6-dihydroxy-2-(hydroxymethyl)-3-methylbenzoic acid (DHMB). MpaDE then acts as a lactone synthase that catalyzes the ring closure to convert DHMB into DHMP. The next step is the prenylation of DHMP by the Golgi apparatus-associated prenyltransferase mpaA to yield farnesyl-DHMP (FDHMP). The ER-bound oxygenase mpaB then mediates the oxidative cleavage the C19-C20 double bond in FDHMP to yield FDHMP-3C via a mycophenolic aldehyde intermediate. The O-methyltransferase mpaG catalyzes the methylation of FDHMP-3C to yield MFDHMP-3C. After the cytosolic methylation of FDHMP-3C, MFDHMP-3C enters into peroxisomes probably via free diffusion due to its low molecular weight. Upon a peroxisomal CoA ligation reaction, catalyzed by a beta-oxidation component enzyme acyl-CoA ligase ACL891, MFDHMP-3C-CoA would then be restricted to peroxisomes for the following beta-oxidation pathway steps. The peroxisomal beta-oxidation machinery than converts MFDHMP-3C-CoA into MPA_CoA, via a beta-oxidation chain-shortening process. Finally mpaH acts as a peroxisomal acyl-CoA hydrolase with high substrate specificity toward MPA-CoA to release the final product MPA. This chain is Cytochrome P450 monooxygenase mpaDE, found in Penicillium brevicompactum.